The primary structure comprises 202 residues: Secreted RxLR effector protein 11 (202 aa).

An N-terminal signal peptide occupies residues 1-23 (MRLNFTKLFAGAVALAWTTESMA). A RxLR-dEER motif is present at residues 49–61 (RRLRTINGADEER).

Belongs to the RxLR effector family.

It is found in the secreted. Its subcellular location is the host cytoplasm. The protein resides in the host nucleus. Functionally, effector that acts as a broad suppressor of cell death to interrupt plant immunity. Inhibits cell death induced by cell death-inducing proteins, including the PAMP elicitor INF1 from P.infestans. In Plasmopara viticola (Downy mildew of grapevine), this protein is Secreted RxLR effector protein 11.